Reading from the N-terminus, the 293-residue chain is Pyridoxal 5'-phosphate synthase subunit PdxS (293 aa).

D-ribose 5-phosphate is bound at residue aspartate 23. Catalysis depends on lysine 80, which acts as the Schiff-base intermediate with D-ribose 5-phosphate. Residue glycine 152 participates in D-ribose 5-phosphate binding. Arginine 164 lines the D-glyceraldehyde 3-phosphate pocket. Residues glycine 213 and glycine 234–serine 235 each bind D-ribose 5-phosphate.

The protein belongs to the PdxS/SNZ family. In the presence of PdxT, forms a dodecamer of heterodimers.

It catalyses the reaction aldehydo-D-ribose 5-phosphate + D-glyceraldehyde 3-phosphate + L-glutamine = pyridoxal 5'-phosphate + L-glutamate + phosphate + 3 H2O + H(+). It participates in cofactor biosynthesis; pyridoxal 5'-phosphate biosynthesis. In terms of biological role, catalyzes the formation of pyridoxal 5'-phosphate from ribose 5-phosphate (RBP), glyceraldehyde 3-phosphate (G3P) and ammonia. The ammonia is provided by the PdxT subunit. Can also use ribulose 5-phosphate and dihydroxyacetone phosphate as substrates, resulting from enzyme-catalyzed isomerization of RBP and G3P, respectively. In Dehalococcoides mccartyi (strain ATCC BAA-2266 / KCTC 15142 / 195) (Dehalococcoides ethenogenes (strain 195)), this protein is Pyridoxal 5'-phosphate synthase subunit PdxS.